The primary structure comprises 746 residues: GTPase-activating protein GYP7 (746 aa).

Ser-265 and Ser-339 each carry phosphoserine. The Rab-GAP TBC domain occupies 385–633; it reads LENDSLRGKV…HIWENFWTFY (249 aa). Positions 470–505 are disordered; it reads TIDGLPPPPQQLPANENNSTSPESANDESDDADDGV. The segment covering 481–491 has biased composition (polar residues); that stretch reads LPANENNSTSP.

The protein resides in the cytoplasm. Its function is as follows. GTPase-activating protein (GAP) that most effectively accelerates the intrinsic GTPase activity of Ypt/Rab-type GTPase YPT7 involved in vacuole docking and fusion. It is also active, but to a lesser extent, on YPT31, YPT32, YPT1, YPT6 and SEC4. Provides a catalytic arginine (arginine finger) in trans to accelerate the GTP hydrolysis rate of the substrate GTPase. This is GTPase-activating protein GYP7 (GYP7) from Saccharomyces cerevisiae (strain ATCC 204508 / S288c) (Baker's yeast).